Consider the following 245-residue polypeptide: Eukaryotic translation initiation factor 4E type 2 (245 aa).

A compositionally biased stretch (basic and acidic residues) spans 1–38; that stretch reads MNNKFDALKDDDSGDHDQNEENSTQKDGEKEKTERDKN. Residues 1–52 form a disordered region; it reads MNNKFDALKDDDSGDHDQNEENSTQKDGEKEKTERDKNQSSSKRKAVVPGPA. At S13 the chain carries Phosphoserine. Residues 54-57 form an EIF4EBP1/2/3 binding region; it reads HPLQ. Position 78-79 (78-79) interacts with mRNA; sequence YE. Residues 95–99 form an EIF4EBP1/2/3 binding region; that stretch reads WRFYS. Residues H110 and 124–125 each bind mRNA; that span reads WE. N6-acetyllysine; alternate is present on K134. Residue K134 forms a Glycyl lysine isopeptide (Lys-Gly) (interchain with G-Cter in ISG15); alternate linkage. The interval 150–157 is EIF4EBP1/2/3 binding; sequence NLILAMLG. Residues 174-179 and 222-224 contribute to the mRNA site; these read RFQEDI and KMP. K222 participates in a covalent cross-link: Glycyl lysine isopeptide (Lys-Gly) (interchain with G-Cter in ISG15).

The protein belongs to the eukaryotic initiation factor 4E family. In terms of assembly, interacts with EIF4EBP1, EIF4EBP2 and EIF4EBP3. Does not interact with eIF4G (EIF4G1, EIF4G2 or EIF4G3). Component of the 4EHP-GYF2 complex, at least composed of EIF4E2, GIGYF2 and ZNF598. Interacts with GIGYF2 (via the 4EHP-binding motif); the interaction is direct. Interacts with EIF4ENIF1/4E-T (via YXXXXLphi motif); increasing affinity for the 7-methylguanosine-containing mRNA cap. In terms of processing, ubiquitinated by ARIH1. The consequences of ubiquitination are however unclear: according to a report, EIF4E2 ubiquitination leads to promote EIF4E2 cap-binding and protein translation arrest. According to another report ubiquitination leads to its subsequent degradation. Post-translationally, ISGylation enhances its cap structure-binding activity and translation-inhibition activity.

The protein resides in the cytoplasm. Its subcellular location is the P-body. Functionally, recognizes and binds the 7-methylguanosine-containing mRNA cap during an early step in the initiation. Acts as a repressor of translation initiation. In contrast to EIF4E, it is unable to bind eIF4G (EIF4G1, EIF4G2 or EIF4G3), suggesting that it acts by competing with EIF4E and block assembly of eIF4F at the cap. In P-bodies, component of a complex that promotes miRNA-mediated translational repression. Involved in virus-induced host response by mediating miRNA MIR34A-induced translational silencing which controls IFNB1 production by a negative feedback mechanism. Component of the 4EHP-GYF2 complex, a multiprotein complex that acts as a repressor of translation initiation. In association with GIGYF2, assists ribosome-associated quality control (RQC) by sequestering the mRNA cap, blocking ribosome initiation and decreasing the translational load on problematic messages. Part of a pathway that works in parallel to RQC-mediated degradation of the stalled nascent polypeptide. GIGYF2 and EIF4E2 work downstream and independently of ZNF598, which seems to work as a scaffold that can recruit them to faulty mRNA even if alternative recruitment mechanisms may exist. Its function is as follows. (Microbial infection) Upon SARS coronavirus-2/SARS-CoV-2 infection, the interaction with non-structural protein 2 (nsp2) with GIGYF2 enhances GIGYF2 binding to EIF4E2 and increases repression of translation initiation of genes involved in antiviral innate immune response such as IFNB1. This is Eukaryotic translation initiation factor 4E type 2 from Homo sapiens (Human).